Reading from the N-terminus, the 64-residue chain is Large ribosomal subunit protein bL33m (64 aa).

The protein belongs to the bacterial ribosomal protein bL33 family. Component of the mitochondrial ribosome large subunit (39S) which comprises a 16S rRNA and about 50 distinct proteins.

Its subcellular location is the mitochondrion. This is Large ribosomal subunit protein bL33m (mRpL33) from Drosophila melanogaster (Fruit fly).